The following is a 354-amino-acid chain: MAQLSQVPYLLRATRGELLDRPPVWMMRQAGRYMKAYRDLREKYPSFRERSENTDIAVEISLQPFHAFKPDGVILFSDILTPLPAIGIDFDIIESKGPIIDPPIRTEAQIDKLHPIEPEESLPFIREILQTLRREVKNEAAVLGFIGAPWTLAAYAIEGKSCKDYTNIKKMAFCQPEMLHKFLGKLAEAIAVYARYQINSGAQVIQMFDSWAGQLSPQDYETFALPYQKLVVQEVKKTHPNTPFILYINGSAGLLERMPQTGVDIVSVDWSVDIAEARQRLGNNICVQGNIDPGVLFGSQEFIKSRILETIRKAGNRGHILNLGHGVLKETPEENVEFFFKTAKEISSLLALTA.

Residues 28-32 (RQAGR), aspartate 78, tyrosine 155, serine 210, and histidine 325 each bind substrate.

It belongs to the uroporphyrinogen decarboxylase family. Homodimer.

The protein resides in the cytoplasm. The enzyme catalyses uroporphyrinogen III + 4 H(+) = coproporphyrinogen III + 4 CO2. Its pathway is porphyrin-containing compound metabolism; protoporphyrin-IX biosynthesis; coproporphyrinogen-III from 5-aminolevulinate: step 4/4. Its function is as follows. Catalyzes the decarboxylation of four acetate groups of uroporphyrinogen-III to yield coproporphyrinogen-III. The polypeptide is Uroporphyrinogen decarboxylase (Trichodesmium erythraeum (strain IMS101)).